The sequence spans 355 residues: MTALKNDRFLRALLKQPVDVTPVWMMRQAGRYLPEYRATRARAGDFMSLCMNPELACEVTLQPLDRYPQLDAAILFSDILTIPDAMGQGLYFETGEGPRFRKVVSSLADIEALPVPDPEKDLGYVMDAVRTIRRELNGRVPLIGFSGSPWTLATYMVEGGSSKDFRKSKAMLYDNPRAMHALLDKLAQSVTSYLNGQIRAGAQAVQIFDSWGGSLSAAAYQEFSLAYMRQIVDGLIREHDGRRVPVILFTKGGGLWLESMAEVGAEALGLDWTCDIGSARARVGERVALQGNMDPSVLYANPAAIRAEVARILAAYGKGTGHVFNLGHGITPEVDPAHAGAFFEAVHELSAQYHG.

Substrate-binding positions include 27–31 (RQAGR), Asp78, Tyr155, Ser210, and His328.

The protein belongs to the uroporphyrinogen decarboxylase family. Homodimer.

It is found in the cytoplasm. The catalysed reaction is uroporphyrinogen III + 4 H(+) = coproporphyrinogen III + 4 CO2. It participates in porphyrin-containing compound metabolism; protoporphyrin-IX biosynthesis; coproporphyrinogen-III from 5-aminolevulinate: step 4/4. In terms of biological role, catalyzes the decarboxylation of four acetate groups of uroporphyrinogen-III to yield coproporphyrinogen-III. The protein is Uroporphyrinogen decarboxylase of Pseudomonas paraeruginosa (strain DSM 24068 / PA7) (Pseudomonas aeruginosa (strain PA7)).